A 145-amino-acid chain; its full sequence is Basic phospholipase A2 beta-bungarotoxin A2 chain (145 aa).

The first 17 residues, 1-17, serve as a signal peptide directing secretion; sequence MLIFLWCGAVCVSLLGA. A propeptide spanning residues 18-25 is cleaved from the precursor; the sequence is ANIPPHPL. 6 disulfides stabilise this stretch: Cys52-Cys144, Cys54-Cys70, Cys69-Cys125, Cys76-Cys118, Cys86-Cys111, and Cys104-Cys116. Residues Tyr53, Gly55, and Gly57 each coordinate Ca(2+). Residue His73 is part of the active site. Position 74 (Asp74) interacts with Ca(2+). Asp119 is an active-site residue.

This sequence belongs to the phospholipase A2 family. Group I subfamily. D49 sub-subfamily. Heterodimer; disulfide-linked. The A chains have phospholipase A2 activity and the B chains show homology with the basic protease inhibitors. The A2 chain is found in beta-3 and beta-4 bungarotoxins. Requires Ca(2+) as cofactor. As to expression, expressed by the venom gland.

Its subcellular location is the secreted. The catalysed reaction is a 1,2-diacyl-sn-glycero-3-phosphocholine + H2O = a 1-acyl-sn-glycero-3-phosphocholine + a fatty acid + H(+). Functionally, snake venom phospholipase A2 (PLA2) that inhibits neuromuscular transmission by blocking acetylcholine release from the nerve termini. PLA2 catalyzes the calcium-dependent hydrolysis of the 2-acyl groups in 3-sn-phosphoglycerides. In Bungarus multicinctus (Many-banded krait), this protein is Basic phospholipase A2 beta-bungarotoxin A2 chain.